Here is a 608-residue protein sequence, read N- to C-terminus: Chaperone protein HtpG (608 aa).

The a; substrate-binding stretch occupies residues 1-332; it reads MQFQTEVNQL…VEDLPLNVSR (332 aa). Residues 333–536 are b; that stretch reads EILQENQILK…KNKPDFAMQQ (204 aa). The interval 537-608 is c; the sequence is LLKQMGQEQN…LTKIINKAFS (72 aa).

This sequence belongs to the heat shock protein 90 family. In terms of assembly, homodimer.

It localises to the cytoplasm. Its function is as follows. Molecular chaperone. Has ATPase activity. This is Chaperone protein HtpG from Campylobacter jejuni subsp. jejuni serotype O:2 (strain ATCC 700819 / NCTC 11168).